The chain runs to 245 residues: NAD-dependent protein deacetylase (245 aa).

The region spanning 1-245 (MLLLDKINEL…SIGKVLETVI (245 aa)) is the Deacetylase sirtuin-type domain. Positions 26, 30, 37, 38, 107, 109, 110, and 125 each coordinate NAD(+). Phe37 provides a ligand contact to nicotinamide. Ile109 and Asp110 together coordinate nicotinamide. The active-site Proton acceptor is the His125. Residues Cys133, Cys136, Cys155, and Cys158 each coordinate Zn(2+). Thr196, Ser197, Asn219, and Ile237 together coordinate NAD(+).

Belongs to the sirtuin family. Class U subfamily. Requires Zn(2+) as cofactor.

Its subcellular location is the cytoplasm. The catalysed reaction is N(6)-acetyl-L-lysyl-[protein] + NAD(+) + H2O = 2''-O-acetyl-ADP-D-ribose + nicotinamide + L-lysyl-[protein]. Functionally, NAD-dependent protein deacetylase which modulates the activities of several enzymes which are inactive in their acetylated form. This is NAD-dependent protein deacetylase from Clostridium acetobutylicum (strain ATCC 824 / DSM 792 / JCM 1419 / IAM 19013 / LMG 5710 / NBRC 13948 / NRRL B-527 / VKM B-1787 / 2291 / W).